A 1489-amino-acid chain; its full sequence is Chromatin-remodeling ATPase INO80 (1489 aa).

2 disordered regions span residues 112–375 (PSIP…APSY) and 467–487 (EEAKKRKLAPPPPPPPQQVRR). Composition is skewed to polar residues over residues 122–142 (SVVSSDTEQIQDSETTANSKK) and 149–162 (IKTSGKSPTKSPAT). Positions 164-177 (GRRRGAGGNRRVKR) are enriched in basic residues. A compositionally biased stretch (polar residues) spans 179–190 (SNLSKTVRSRNA). The span at 198–207 (NENIENGGTT) shows a compositional bias: low complexity. Positions 235 to 252 (HTEKDASGSAADLDKDIV) are enriched in basic and acidic residues. Residues 268-289 (VSSTSLLSRNKSNKPTKSSPLT) show a composition bias toward polar residues. Acidic residues-rich tracts occupy residues 305–319 (GNEDMDHDSVLDADD) and 327–371 (NPND…DDDF). The DBINO domain occupies 518–643 (IWKDMARRDS…SHFIGSKIKT (126 aa)). Residues 758-930 (ANLYDQGING…WALLHFIMPS (173 aa)) enclose the Helicase ATP-binding domain. Residue 771-778 (DEMGLGKT) participates in ATP binding. A DEAQ box motif is present at residues 881–884 (DEAQ). The 157-residue stretch at 1323–1479 (KLDELLVKLK…KAKENKQKII (157 aa)) folds into the Helicase C-terminal domain.

The protein belongs to the SNF2/RAD54 helicase family. In terms of assembly, component of the INO80 chromatin-remodeling complex.

It is found in the nucleus. The catalysed reaction is ATP + H2O = ADP + phosphate + H(+). In terms of biological role, ATPase component of the INO80 complex which remodels chromatin by shifting nucleosomes and is involved in DNA repair. This is Chromatin-remodeling ATPase INO80 (INO80) from Kluyveromyces lactis (strain ATCC 8585 / CBS 2359 / DSM 70799 / NBRC 1267 / NRRL Y-1140 / WM37) (Yeast).